A 759-amino-acid polypeptide reads, in one-letter code: Tripartite motif-containing protein 46 (759 aa).

The interval 1 to 166 (MAEGEDMQTF…VERYRQSVSV (166 aa)) is required for proximal axon localization, axon formation and migration. An RING-type 1; degenerate zinc finger spans residues 33-59 (CPVCQEMYKQPLVLPCTHNVCQACARE). The tract at residues 67–98 (IGHGGDPSSEPTSPASTPSTRSPRLSRRTLPK) is disordered. A compositionally biased stretch (low complexity) spans 73–89 (PSSEPTSPASTPSTRSP). The RING-type 2; degenerate zinc finger occupies 172–231 (CQLCKPPPLEATKGCSECRATFCNECFKLFHPWGTQKAQHEPTLPTLSFRPKGLMCPDHK). The B box-type zinc finger occupies 222-263 (PKGLMCPDHKEEVTHYCKTCQRLVCQLCRVRRTHSGHKITPV). Cysteine 227, histidine 230, cysteine 249, and histidine 255 together coordinate Zn(2+). A coiled-coil region spans residues 294–400 (ELEETIRHTE…RATEALQTFR (107 aa)). Phosphoserine is present on serine 330. In terms of domain architecture, COS spans 370–427 (LKETDQPCFVQAAKQLHNRIARATEALQTFRPAASSSFRHCQLDVGREMKLLTELNFL). The interval 411 to 429 (QLDVGREMKLLTELNFLRV) is required for microtubule association, proximal axon localization and axon formation. One can recognise a Fibronectin type-III domain in the interval 429–528 (VPEAPVIDTQ…EDVHLHTPPA (100 aa)). The B30.2/SPRY domain maps to 513–747 (GYGEYSEDVH…LQEPVGTKPE (235 aa)). At serine 627 the chain carries Phosphoserine.

Belongs to the TRIM/RBCC family. In terms of assembly, interacts with TUBB3 and TUBA4A. As to expression, expressed in primary hippocampal and cortical neurons.

The protein localises to the cell projection. It is found in the axon. The protein resides in the cytoplasm. Its subcellular location is the cytoskeleton. Microtubule-associated protein that is involved in the formation of parallel microtubule bundles linked by cross-bridges in the proximal axon. Required for the uniform orientation and maintenance of the parallel microtubule fascicles, which are important for efficient cargo delivery and trafficking in axons. Thereby also required for proper axon specification, the establishment of neuronal polarity and proper neuronal migration. The polypeptide is Tripartite motif-containing protein 46 (Rattus norvegicus (Rat)).